Consider the following 209-residue polypeptide: Cytidylate kinase (209 aa).

Position 9–17 (9–17) interacts with ATP; sequence GPAAAGKGT.

It belongs to the cytidylate kinase family. Type 1 subfamily.

It localises to the cytoplasm. It carries out the reaction CMP + ATP = CDP + ADP. The enzyme catalyses dCMP + ATP = dCDP + ADP. The chain is Cytidylate kinase from Granulibacter bethesdensis (strain ATCC BAA-1260 / CGDNIH1).